A 427-amino-acid polypeptide reads, in one-letter code: Inward rectifier potassium channel 2 (427 aa).

Over Met-1–Trp-81 the chain is Cytoplasmic. Cys-76 carries the post-translational modification S-nitrosocysteine. The chain crosses the membrane as a helical span at residues Arg-82–Ile-106. At Ala-107 to Ser-128 the chain is on the extracellular side. Residues Phe-129–Gln-140 constitute an intramembrane region (helical; Pore-forming). Positions Thr-141 to Phe-147 form an intramembrane region, pore-forming. The Selectivity filter signature appears at Thr-142–Phe-147. Topologically, residues Arg-148–Val-156 are extracellular. A helical transmembrane segment spans residues Ala-157–Ala-178. Over Val-179–Ile-427 the chain is Cytoplasmic. Residues Ala-181–Leu-208 form a polyphosphoinositide (PIP2)-binding region. Residues Ser-384–Ile-427 are disordered. A PDZ-binding motif is present at residues Ser-425–Ile-427.

The protein belongs to the inward rectifier-type potassium channel (TC 1.A.2.1) family. KCNJ2 subfamily. Homotetramer. Homomultimeric and heteromultimeric association with KCNJ4/Kir2.3. Can form heteromeric channels with Kir2.6/KCNJ18. Associates, via its PDZ-recognition domain, with a complex containing LIN7A, LIN7B, LIN7C, DLG1, CASK and APBA1. S-nitrosylation increases the open probability and inward rectifying currents.

It is found in the cell membrane. The protein resides in the sarcolemma. It localises to the T-tubule. It catalyses the reaction K(+)(in) = K(+)(out). Activated by phosphatidylinositol 4,5 biphosphate (PtdIns(4,5)P2). Inward rectifier potassium channels are characterized by a greater tendency to allow potassium to flow into the cell rather than out of it. Their voltage dependence is regulated by the concentration of extracellular potassium; as external potassium is raised, the voltage range of the channel opening shifts to more positive voltages. The inward rectification is mainly due to the blockage of outward current by internal magnesium. Can be blocked by extracellular barium and cesium. Probably participates in establishing action potential waveform and excitability of neuronal and muscle tissues. The sequence is that of Inward rectifier potassium channel 2 (KCNJ2) from Bos taurus (Bovine).